A 245-amino-acid chain; its full sequence is Transmembrane and ubiquitin-like domain-containing protein 1 (245 aa).

The interval 2 to 30 is required to release iHOPS from membranes; it reads ALIEGVGDEVTVLFAVLACLLVLALAWVS. A helical transmembrane segment spans residues 11–31; it reads VTVLFAVLACLLVLALAWVST. A disordered region spans residues 33–100; that stretch reads TTESTDPQPQ…ASTPPDSPQE (68 aa). 3 positions are modified to phosphoserine: Ser-73, Ser-97, and Ser-126. The Ubiquitin-like domain maps to 102-175; sequence LLLRLKFLND…LHCHVSTRVG (74 aa). The next 2 helical transmembrane spans lie at 194-214 and 219-239; these read IGSL…YCQI and FFPL…SLLA.

Interacts with EEF1A1, CAMLG, GRIA2 and GRIP1. Interacts with NPM1 and CDKN2A; TMUB1 can enhance interaction between NPM1 and CDKN2A and is proposed to bridge the proteins; proposed to be mediated by iHOPS. Interacts with TUBG1. Interacts with ERLIN2 and AMFR; TMUB1 promotes the interaction of ERLIN2 with AMFR. Isoform 1 (lHOPS) is processed by regulated intramembrane proteolysis (RIP) in the N-terminus to release iHOPS from membranes. In terms of processing, isoform 2 seems to undergo a selective cleavage in the C-terminal region to release an additional cytoplasmic form. As to expression, expressed in adult brain; at protein level. Isoform 1 (lHOPS) is highly expressed in small intestine, stomach and epididymis. Isoform 2 (sHOPS) and iHOPS are abundantly expressed in brain, liver and adrenal gland.

Its subcellular location is the membrane. The protein resides in the postsynaptic cell membrane. The protein localises to the recycling endosome. It localises to the cytoplasm. It is found in the nucleus. Its subcellular location is the nucleolus. The protein resides in the cytoskeleton. The protein localises to the microtubule organizing center. It localises to the centrosome. In terms of biological role, involved in sterol-regulated ubiquitination and degradation of HMG-CoA reductase HMGCR. Involved in positive regulation of AMPA-selective glutamate receptor GRIA2 recycling to the cell surface. Acts as a negative regulator of hepatocyte growth during regeneration. Functionally, may contribute to the regulation of translation during cell-cycle progression. May contribute to the regulation of cell proliferation. May be involved in centrosome assembly. Modulates stabilization and nucleolar localization of tumor suppressor CDKN2A and enhances association between CDKN2A and NPM1. The polypeptide is Transmembrane and ubiquitin-like domain-containing protein 1 (Tmub1) (Mus musculus (Mouse)).